Reading from the N-terminus, the 497-residue chain is Zinc finger protein ZIC 2-B (497 aa).

Disordered regions lie at residues 58–107 (HMGA…TSQA) and 143–180 (SAAA…PQGH). A compositionally biased stretch (gly residues) spans 66-88 (PGGGSGGGSGGGGGAGPNGGAGA). Residues 97 to 107 (PGQTSAFTSQA) show a composition bias toward polar residues. Basic residues predominate over residues 161 to 171 (LHHHPHHHHQL). The segment at 273–308 (LICKWIDPEQLNNPKKSCNKTFSTMHELVTHMSVEH) adopts a C2H2-type 1; atypical zinc-finger fold. The C2H2-type 2; atypical zinc-finger motif lies at 317 to 344 (HICFWEECAREGKPFKAKYKLVNHIRVH). 3 C2H2-type zinc fingers span residues 350 to 374 (FPCP…KRTH), 380 to 404 (FQCE…MHVH), and 410 to 432 (YLCK…MKVH). A disordered region spans residues 423–473 (SSLRKHMKVHESSPQGSESSPAASSGYESSTPPGLVSPNSETQNPNLSPAA). Over residues 434–452 (SSPQGSESSPAASSGYESS) the composition is skewed to low complexity. Over residues 459–469 (SPNSETQNPNL) the composition is skewed to polar residues.

It belongs to the GLI C2H2-type zinc-finger protein family.

The protein localises to the nucleus. Its subcellular location is the cytoplasm. In terms of biological role, transcriptional repressor that inhibits neurogenesis and induces neural and neural crest differentiation. Regulates anteroposterior patterning in early development by inhibiting expression of the nodal genes through the inhibition of vegt. Required for gastrulation movements and for proper anterior neural and axial development. May also act as a transcriptional activator. May bind to the minimal GLI-consensus sequence 5'-TGGGTGGTC-3'. This Xenopus laevis (African clawed frog) protein is Zinc finger protein ZIC 2-B (zic2-b).